The primary structure comprises 450 residues: Transcription factor SCREAM2 (450 aa).

3 disordered regions span residues 1-47, 207-231, and 244-265; these read MNSD…NQND, RQSSSSKMCNSESSSEMRKSSYERE, and GLNYESDDHNTNNNKGKKKGMP. The segment covering 209–220 has biased composition (low complexity); sequence SSSSKMCNSESS. Over residues 221-230 the composition is skewed to basic and acidic residues; that stretch reads SEMRKSSYER. One can recognise a bHLH domain in the interval 263 to 312; that stretch reads GMPAKNLMAERRRRKKLNDRLYMLRSVVPKISKMDRASILGDAIDYLKEL. One can recognise an ACT domain in the interval 378–450; the sequence is NIHMFCGRRP…LDTAGYAGLV (73 aa).

As to quaternary structure, homodimer. Heterodimers with SPCH, MUTE, and FAMA. In terms of tissue distribution, expressed constitutively in roots, leaves, stems, and flowers. Broad expression within stomatal cell lineages of leaf epidermis, except in mature guard-cells.

It is found in the nucleus. In terms of biological role, mediates stomatal differentiation in the epidermis probably by controlling successive roles of SPCH, MUTE, and FAMA. Functions as a dimer with SPCH during stomatal initiation. The protein is Transcription factor SCREAM2 (SCRM2) of Arabidopsis thaliana (Mouse-ear cress).